We begin with the raw amino-acid sequence, 99 residues long: Cysteine-rich C-terminal protein 1 (99 aa).

Disordered regions lie at residues 1–42 and 65–99; these read MSSQ…CCGS and RRRR…CSGC. Residues 22–32 are compositionally biased toward pro residues; the sequence is APCPAPAPTPA. Residues 83-99 are compositionally biased toward low complexity; that stretch reads QRSQRSNNRSSGCCSGC.

This is Cysteine-rich C-terminal protein 1 (CRCT1) from Homo sapiens (Human).